Here is an 81-residue protein sequence, read N- to C-terminus: Small ribosomal subunit protein bS18 (81 aa).

This sequence belongs to the bacterial ribosomal protein bS18 family. In terms of assembly, part of the 30S ribosomal subunit. Forms a tight heterodimer with protein bS6.

Binds as a heterodimer with protein bS6 to the central domain of the 16S rRNA, where it helps stabilize the platform of the 30S subunit. This is Small ribosomal subunit protein bS18 from Chloroflexus aurantiacus (strain ATCC 29366 / DSM 635 / J-10-fl).